Here is a 188-residue protein sequence, read N- to C-terminus: HGPRTase-like protein 1 (188 aa).

The protein belongs to the purine/pyrimidine phosphoribosyltransferase family. Archaeal HPRT subfamily.

Its function is as follows. May catalyze a purine salvage reaction, the substrate is unknown. In Haloferax volcanii (strain ATCC 29605 / DSM 3757 / JCM 8879 / NBRC 14742 / NCIMB 2012 / VKM B-1768 / DS2) (Halobacterium volcanii), this protein is HGPRTase-like protein 1.